A 363-amino-acid polypeptide reads, in one-letter code: B3 domain-containing transcription factor LEC2 (363 aa).

The disordered stretch occupies residues 1–27; sequence MDNFLPFPSSNANSVQELSMDPNNNRS. The span at 8-27 shows a compositional bias: polar residues; sequence PSSNANSVQELSMDPNNNRS. A DNA-binding region (TF-B3) is located at residues 171–272; that stretch reads CEKELKNSDV…NLYFAMNGNS (102 aa). The interval 331–351 is disordered; it reads QHHQATSSSMPPEDHAYVGSS.

It is found in the nucleus. Its function is as follows. Transcription regulator that plays a central role in embryo development. Required for the maintenance of suspensor morphology, specification of cotyledon identity, progression through the maturation phase and suppression of premature germination. Ectopic expression is sufficient to promote somatic embryogenesis. This chain is B3 domain-containing transcription factor LEC2 (LEC2), found in Arabidopsis thaliana (Mouse-ear cress).